The following is a 680-amino-acid chain: WD repeat-containing protein 48 homolog (680 aa).

8 WD repeats span residues 26–65 (QHRN…SEKY), 71–110 (HHND…CMST), 113–152 (THRD…ALTA), 164–203 (GSKD…RSMK), 206–245 (GHTE…CVQT), 248–287 (VHKE…NKTL), 290–329 (EEKA…RGTL), and 350–389 (KGGA…KKDT). Positions 594–618 (TPSGANANNSLQNSQSDGNSEGSQL) are disordered. The segment covering 596-609 (SGANANNSLQNSQS) has biased composition (low complexity).

The protein belongs to the WD repeat WDR48 family. Catalytic component of the Usp12-46 deubiquitylase complex consisting of Usp12-46, Wdr20 and Uaf1; regulatory subunit that, together wtih Wdr20, stabilizes Usp12-46. The Usp12-46 deubiquitylase complex associates with arr/arrow; the interaction leads to deubiquitination and stabilization of arr/arrow.

In terms of biological role, regulatory component of the Usp12-46 deubiquitylase complex. activates deubiquitination by increasing the catalytic turnover without increasing the affinity of deubiquitinating enzymes for the substrate. The complex deubiquitylates the wg/wingless-signaling receptor arr/arrow, which stabilizes the receptor and increases its concentration at the cell surface; this enhances the sensitivity of cells to wg/wingless-signal stimulation. This increases the amplitude and spatial range of the signaling response to the wg/wingless morphogen gradient, facilitating the precise concentration-dependent regulation of its target genes. Together with Wdr20 and Usp12-46 required for wg/wingless-mediated signaling in the wing imaginal disc and for wg/wingless-dependent regulation of intestinal stem cell proliferation. This is WD repeat-containing protein 48 homolog from Drosophila persimilis (Fruit fly).